A 284-amino-acid polypeptide reads, in one-letter code: Nucleotide-binding protein Shewmr7_3352 (284 aa).

Position 8–15 (8–15 (GRSGSGKS)) interacts with ATP. Residue 56–59 (DVRN) coordinates GTP.

This sequence belongs to the RapZ-like family.

Its function is as follows. Displays ATPase and GTPase activities. The polypeptide is Nucleotide-binding protein Shewmr7_3352 (Shewanella sp. (strain MR-7)).